A 92-amino-acid polypeptide reads, in one-letter code: Small ribosomal subunit protein uS19c (92 aa).

Belongs to the universal ribosomal protein uS19 family.

The protein resides in the plastid. Its subcellular location is the chloroplast. Its function is as follows. Protein S19 forms a complex with S13 that binds strongly to the 16S ribosomal RNA. This is Small ribosomal subunit protein uS19c (rps19) from Glycine max (Soybean).